The primary structure comprises 762 residues: Mitochondrial intermediate peptidase (762 aa).

Residues 1–28 constitute a mitochondrion transit peptide; sequence MQVRTLLTLGKKKVIGNRQCILSLYRKY. A Zn(2+)-binding site is contributed by H544. Residue E545 is part of the active site. The Zn(2+) site is built by H548 and H551.

This sequence belongs to the peptidase M3 family. Requires Zn(2+) as cofactor.

The protein resides in the mitochondrion matrix. It catalyses the reaction Release of an N-terminal octapeptide as second stage of processing of some proteins imported into the mitochondrion.. Functionally, cleaves proteins, imported into the mitochondrion, to their mature size. While most mitochondrial precursor proteins are processed to the mature form in one step by mitochondrial processing peptidase (MPP), the sequential cleavage by MIP of an octapeptide after initial processing by MPP is a required step for a subgroup of nuclear-encoded precursor proteins destined for the matrix or the inner membrane. The sequence is that of Mitochondrial intermediate peptidase (oct1) from Schizosaccharomyces pombe (strain 972 / ATCC 24843) (Fission yeast).